We begin with the raw amino-acid sequence, 148 residues long: Large ribosomal subunit protein uL15 (148 aa).

Positions 1 to 30 (MPSRLRKTRKLRGHVSHGHGRIGKHRKHPG) are enriched in basic residues. The disordered stretch occupies residues 1 to 37 (MPSRLRKTRKLRGHVSHGHGRIGKHRKHPGGRGNAGG). Residue histidine 39 is modified to (3S)-3-hydroxyhistidine. An N6-acetyllysine mark is found at lysine 47 and lysine 55. Serine 68 carries the phosphoserine modification. Lysine 110 bears the N6-acetyllysine mark.

This sequence belongs to the universal ribosomal protein uL15 family. In terms of assembly, component of the large ribosomal subunit. Hydroxylated on His-39 by MINA.

It localises to the cytoplasm. Its function is as follows. Component of the large ribosomal subunit. The ribosome is a large ribonucleoprotein complex responsible for the synthesis of proteins in the cell. The protein is Large ribosomal subunit protein uL15 (Rpl27a) of Mus musculus (Mouse).